The following is a 158-amino-acid chain: Endoribonuclease YbeY (158 aa).

H124, H128, and H134 together coordinate Zn(2+).

This sequence belongs to the endoribonuclease YbeY family. Zn(2+) serves as cofactor.

It localises to the cytoplasm. Functionally, single strand-specific metallo-endoribonuclease involved in late-stage 70S ribosome quality control and in maturation of the 3' terminus of the 16S rRNA. This Caldicellulosiruptor bescii (strain ATCC BAA-1888 / DSM 6725 / KCTC 15123 / Z-1320) (Anaerocellum thermophilum) protein is Endoribonuclease YbeY.